Consider the following 542-residue polypeptide: Protein XP55 (542 aa).

The first 33 residues, 1-33 (MTARRTRWTRRTDRSLPIRSAAAAVAFAAGATA), serve as a signal peptide directing secretion. A lipid anchor (N-palmitoyl cysteine) is attached at Cys34. Cys34 carries the S-diacylglycerol cysteine lipid modification. The segment at 519–542 (LEGRTNTASPAGPGGTSRTGGRKK) is disordered.

This sequence belongs to the bacterial solute-binding protein 5 family.

The protein resides in the cell membrane. Its function is as follows. Required for transport of an unidentified substrate. The protein is Protein XP55 (xp55) of Streptomyces lividans.